A 161-amino-acid polypeptide reads, in one-letter code: Nucleotide-binding protein Plav_2177 (161 aa).

This sequence belongs to the YajQ family.

Nucleotide-binding protein. This Parvibaculum lavamentivorans (strain DS-1 / DSM 13023 / NCIMB 13966) protein is Nucleotide-binding protein Plav_2177.